The sequence spans 324 residues: UDP-N-acetylenolpyruvoylglucosamine reductase (324 aa).

The FAD-binding PCMH-type domain occupies 38 to 217; the sequence is AGGLAELMFQ…IRAEMDAVRQ (180 aa). R183 is a catalytic residue. The active-site Proton donor is the S232. Residue E302 is part of the active site.

This sequence belongs to the MurB family. FAD is required as a cofactor.

Its subcellular location is the cytoplasm. It catalyses the reaction UDP-N-acetyl-alpha-D-muramate + NADP(+) = UDP-N-acetyl-3-O-(1-carboxyvinyl)-alpha-D-glucosamine + NADPH + H(+). It functions in the pathway cell wall biogenesis; peptidoglycan biosynthesis. In terms of biological role, cell wall formation. This chain is UDP-N-acetylenolpyruvoylglucosamine reductase, found in Allorhizobium ampelinum (strain ATCC BAA-846 / DSM 112012 / S4) (Agrobacterium vitis (strain S4)).